Here is a 290-residue protein sequence, read N- to C-terminus: 33 kDa chaperonin (290 aa).

2 cysteine pairs are disulfide-bonded: C236–C238 and C269–C272.

Belongs to the HSP33 family. Under oxidizing conditions two disulfide bonds are formed involving the reactive cysteines. Under reducing conditions zinc is bound to the reactive cysteines and the protein is inactive.

It is found in the cytoplasm. In terms of biological role, redox regulated molecular chaperone. Protects both thermally unfolding and oxidatively damaged proteins from irreversible aggregation. Plays an important role in the bacterial defense system toward oxidative stress. The protein is 33 kDa chaperonin of Brevibacillus brevis (strain 47 / JCM 6285 / NBRC 100599).